Here is a 342-residue protein sequence, read N- to C-terminus: Holliday junction branch migration complex subunit RuvB (342 aa).

Residues 1–179 (MTNILSPEKS…FGIPMRLNFY (179 aa)) form a large ATPase domain (RuvB-L) region. ATP contacts are provided by residues Ile-18, Arg-19, Gly-60, Lys-63, Thr-64, Thr-65, 126-128 (EDF), Arg-169, Tyr-179, and Arg-216. Thr-64 serves as a coordination point for Mg(2+). Residues 180–250 (NTEELKQVLN…ICDFGLKRLT (71 aa)) are small ATPAse domain (RuvB-S). The segment at 253 to 342 (SIGLDSNDYR…HQFNILNENE (90 aa)) is head domain (RuvB-H). DNA contacts are provided by Arg-289, Arg-308, and Arg-313.

Belongs to the RuvB family. As to quaternary structure, homohexamer. Forms an RuvA(8)-RuvB(12)-Holliday junction (HJ) complex. HJ DNA is sandwiched between 2 RuvA tetramers; dsDNA enters through RuvA and exits via RuvB. An RuvB hexamer assembles on each DNA strand where it exits the tetramer. Each RuvB hexamer is contacted by two RuvA subunits (via domain III) on 2 adjacent RuvB subunits; this complex drives branch migration. In the full resolvosome a probable DNA-RuvA(4)-RuvB(12)-RuvC(2) complex forms which resolves the HJ.

Its subcellular location is the cytoplasm. The catalysed reaction is ATP + H2O = ADP + phosphate + H(+). Its function is as follows. The RuvA-RuvB-RuvC complex processes Holliday junction (HJ) DNA during genetic recombination and DNA repair, while the RuvA-RuvB complex plays an important role in the rescue of blocked DNA replication forks via replication fork reversal (RFR). RuvA specifically binds to HJ cruciform DNA, conferring on it an open structure. The RuvB hexamer acts as an ATP-dependent pump, pulling dsDNA into and through the RuvAB complex. RuvB forms 2 homohexamers on either side of HJ DNA bound by 1 or 2 RuvA tetramers; 4 subunits per hexamer contact DNA at a time. Coordinated motions by a converter formed by DNA-disengaged RuvB subunits stimulates ATP hydrolysis and nucleotide exchange. Immobilization of the converter enables RuvB to convert the ATP-contained energy into a lever motion, pulling 2 nucleotides of DNA out of the RuvA tetramer per ATP hydrolyzed, thus driving DNA branch migration. The RuvB motors rotate together with the DNA substrate, which together with the progressing nucleotide cycle form the mechanistic basis for DNA recombination by continuous HJ branch migration. Branch migration allows RuvC to scan DNA until it finds its consensus sequence, where it cleaves and resolves cruciform DNA. This chain is Holliday junction branch migration complex subunit RuvB, found in Rickettsia typhi (strain ATCC VR-144 / Wilmington).